Here is a 368-residue protein sequence, read N- to C-terminus: Protein HGH1 homolog (368 aa).

The protein belongs to the HGH1 family.

This Drosophila pseudoobscura pseudoobscura (Fruit fly) protein is Protein HGH1 homolog.